The primary structure comprises 474 residues: Bifunctional protein HldE (474 aa).

Residues 1–318 (MKLSMPRFDQ…RAIQREEGSE (318 aa)) are ribokinase. 194–197 (NLSE) provides a ligand contact to ATP. Residue aspartate 263 is part of the active site. The tract at residues 343-474 (FTNGCFDILH…AIVEKIRGQG (132 aa)) is cytidylyltransferase.

It in the N-terminal section; belongs to the carbohydrate kinase PfkB family. The protein in the C-terminal section; belongs to the cytidylyltransferase family. In terms of assembly, homodimer.

The catalysed reaction is D-glycero-beta-D-manno-heptose 7-phosphate + ATP = D-glycero-beta-D-manno-heptose 1,7-bisphosphate + ADP + H(+). It catalyses the reaction D-glycero-beta-D-manno-heptose 1-phosphate + ATP + H(+) = ADP-D-glycero-beta-D-manno-heptose + diphosphate. Its pathway is nucleotide-sugar biosynthesis; ADP-L-glycero-beta-D-manno-heptose biosynthesis; ADP-L-glycero-beta-D-manno-heptose from D-glycero-beta-D-manno-heptose 7-phosphate: step 1/4. It participates in nucleotide-sugar biosynthesis; ADP-L-glycero-beta-D-manno-heptose biosynthesis; ADP-L-glycero-beta-D-manno-heptose from D-glycero-beta-D-manno-heptose 7-phosphate: step 3/4. Its function is as follows. Catalyzes the phosphorylation of D-glycero-D-manno-heptose 7-phosphate at the C-1 position to selectively form D-glycero-beta-D-manno-heptose-1,7-bisphosphate. Catalyzes the ADP transfer from ATP to D-glycero-beta-D-manno-heptose 1-phosphate, yielding ADP-D-glycero-beta-D-manno-heptose. This Pseudomonas savastanoi pv. phaseolicola (strain 1448A / Race 6) (Pseudomonas syringae pv. phaseolicola (strain 1448A / Race 6)) protein is Bifunctional protein HldE.